The following is a 484-amino-acid chain: Regulatory protein ViaA (484 aa).

It belongs to the ViaA family. In terms of assembly, homodimer. Interacts with RavA.

Its subcellular location is the cytoplasm. Its function is as follows. Component of the RavA-ViaA chaperone complex, which may act on the membrane to optimize the function of some of the respiratory chains. ViaA stimulates the ATPase activity of RavA. This chain is Regulatory protein ViaA, found in Edwardsiella ictaluri (strain 93-146).